A 143-amino-acid polypeptide reads, in one-letter code: SsrA-binding protein (143 aa).

Belongs to the SmpB family.

The protein localises to the cytoplasm. In terms of biological role, required for rescue of stalled ribosomes mediated by trans-translation. Binds to transfer-messenger RNA (tmRNA), required for stable association of tmRNA with ribosomes. tmRNA and SmpB together mimic tRNA shape, replacing the anticodon stem-loop with SmpB. tmRNA is encoded by the ssrA gene; the 2 termini fold to resemble tRNA(Ala) and it encodes a 'tag peptide', a short internal open reading frame. During trans-translation Ala-aminoacylated tmRNA acts like a tRNA, entering the A-site of stalled ribosomes, displacing the stalled mRNA. The ribosome then switches to translate the ORF on the tmRNA; the nascent peptide is terminated with the 'tag peptide' encoded by the tmRNA and targeted for degradation. The ribosome is freed to recommence translation, which seems to be the essential function of trans-translation. The sequence is that of SsrA-binding protein from Mycoplasmopsis synoviae (strain 53) (Mycoplasma synoviae).